Here is an 807-residue protein sequence, read N- to C-terminus: PGC-1 and ERR-induced regulator in muscle protein 1 (807 aa).

Disordered regions lie at residues 29-80 (QADL…EDVA), 121-391 (CPGQ…TPAS), and 517-548 (PSHE…AGSR). Composition is skewed to low complexity over residues 40–52 (SSDI…SGSS) and 145–160 (PAPS…PESP). Polar residues predominate over residues 162–171 (HSDNPQSSPD). The span at 180 to 194 (PGRKKRRAVGAKGTK) shows a compositional bias: basic residues. 3 stretches are compositionally biased toward polar residues: residues 195 to 211 (HSGS…SPQL), 311 to 346 (KPQS…STPA), and 363 to 391 (ALST…TPAS). S198 is subject to Phosphoserine. A Phosphothreonine modification is found at T534. Position 548 is an omega-N-methylarginine (R548).

Highly expressed in skeletal muscles and heart with lower levels in brown adipose tissue (at protein level). Muscle-specific expression is increased by endurance exercise.

It is found in the cytoplasm. It localises to the nucleus. In terms of biological role, regulates the expression of selective PPARGC1A/B and ESRRA/B/G target genes with roles in glucose and lipid metabolism, energy transfer, contractile function, muscle mitochondrial biogenesis and oxidative capacity. Required for the efficient induction of MT-CO2, MT-CO3, COX4I1, TFB1M, TFB2M, POLRMT and SIRT3 by PPARGC1A. Positively regulates the PPARGC1A/ESRRG-induced expression of CKMT2, TNNI3 and SLC2A4 and negatively regulates the PPARGC1A/ESRRG-induced expression of PDK4. In Mus musculus (Mouse), this protein is PGC-1 and ERR-induced regulator in muscle protein 1 (Perm1).